The following is a 108-amino-acid chain: Large ribosomal subunit protein bL31B (108 aa).

The segment at 88–108 is disordered; the sequence is AAVEEAPAVKSKKKAPIKKKK. The span at 97-108 shows a compositional bias: basic residues; that stretch reads KSKKKAPIKKKK.

Belongs to the bacterial ribosomal protein bL31 family. Type B subfamily. Part of the 50S ribosomal subunit.

The polypeptide is Large ribosomal subunit protein bL31B (Chlamydia abortus (strain DSM 27085 / S26/3) (Chlamydophila abortus)).